The sequence spans 781 residues: Zinc finger protein klf1 (781 aa).

2 C2H2-type zinc fingers span residues 17-41 (YKCD…FRSH) and 47-70 (FICP…NQKH).

It localises to the nucleus. The protein resides in the cytoplasm. The protein localises to the cytoskeleton. It is found in the spindle. Required for maintaining cell viability in nitrogen-deficient stationary phase (G0) cells. The chain is Zinc finger protein klf1 (klf1) from Schizosaccharomyces pombe (strain 972 / ATCC 24843) (Fission yeast).